The sequence spans 417 residues: Maltodextrin-binding protein MdxE (417 aa).

The first 22 residues, 1–22 (MVLLKKGFAILAASFLAIGLAA), serve as a signal peptide directing secretion. The N-palmitoyl cysteine moiety is linked to residue cysteine 23. Cysteine 23 carries the S-diacylglycerol cysteine lipid modification.

Belongs to the bacterial solute-binding protein 1 family. The complex is composed of two ATP-binding proteins (MsmX), two transmembrane proteins (MdxF and MdxG) and a solute-binding protein (MdxE).

It localises to the cell membrane. With respect to regulation, inhibited by glucose and lactose. In terms of biological role, part of the ABC transporter complex involved in maltodextrin import. Binds maltodextrin. Can also bind maltose with low affinity, but is not involved in its uptake. This Bacillus subtilis (strain 168) protein is Maltodextrin-binding protein MdxE (mdxE).